A 136-amino-acid polypeptide reads, in one-letter code: Gilles de la Tourette syndrome chromosomal region candidate gene 1 protein (136 aa).

Residues 73-93 form a helical membrane-spanning segment; it reads AICMEVFLFLWFIAPIYACVC.

It localises to the membrane. The polypeptide is Gilles de la Tourette syndrome chromosomal region candidate gene 1 protein (GTSCR1) (Homo sapiens (Human)).